Here is a 138-residue protein sequence, read N- to C-terminus: ATP synthase epsilon chain (138 aa).

It belongs to the ATPase epsilon chain family. F-type ATPases have 2 components, CF(1) - the catalytic core - and CF(0) - the membrane proton channel. CF(1) has five subunits: alpha(3), beta(3), gamma(1), delta(1), epsilon(1). CF(0) has three main subunits: a, b and c.

Its subcellular location is the cell inner membrane. Produces ATP from ADP in the presence of a proton gradient across the membrane. The polypeptide is ATP synthase epsilon chain (Methylibium petroleiphilum (strain ATCC BAA-1232 / LMG 22953 / PM1)).